Reading from the N-terminus, the 317-residue chain is UAP56-interacting factor (317 aa).

Methionine 1 is modified (N-acetylmethionine). Residues 1-23 form a disordered region; that stretch reads MNRFGTRLVGATATTPPAPKARS. Threonine 14 carries the phosphothreonine modification. Serine 23 carries the phosphoserine modification. Positions 26-44 match the UAP56-binding motif motif; sequence NLDKIDMSLDEIIKLNRKE. A phosphoserine mark is found at serine 60 and serine 117. Residue lysine 139 forms a Glycyl lysine isopeptide (Lys-Gly) (interchain with G-Cter in SUMO1) linkage. Lysine 260 is covalently cross-linked (Glycyl lysine isopeptide (Lys-Gly) (interchain with G-Cter in SUMO2)).

It belongs to the UIF family. In terms of assembly, interacts with DDX39B/UAP56 and NXF1; interaction with DDX39B/UAP56 and NXF1 are mutually exclusive. Interacts with SSRP1; required for its recruitment to mRNAs. Interacts with CHTOP.

Its subcellular location is the nucleus. It is found in the nucleoplasm. The protein resides in the nucleus speckle. In terms of biological role, required for mRNA export from the nucleus to the cytoplasm. Acts as an adapter that uses the DDX39B/UAP56-NFX1 pathway to ensure efficient mRNA export and delivering to the nuclear pore. Associates with spliced and unspliced mRNAs simultaneously with ALYREF/THOC4. The chain is UAP56-interacting factor (Fyttd1) from Rattus norvegicus (Rat).